The chain runs to 230 residues: Ribonuclease 3 (230 aa).

An RNase III domain is found at 8 to 135 (IVELKEKLGI…LIGAVYLQTN (128 aa)). E48 is a binding site for Mg(2+). The active site involves D52. Mg(2+) is bound by residues D121 and E124. E124 is a catalytic residue. Positions 161-230 (DYKTMIQELV…AHFAFQKLSK (70 aa)) constitute a DRBM domain.

The protein belongs to the ribonuclease III family. In terms of assembly, homodimer. Mg(2+) serves as cofactor.

It localises to the cytoplasm. It catalyses the reaction Endonucleolytic cleavage to 5'-phosphomonoester.. Digests double-stranded RNA. Involved in the processing of primary rRNA transcript to yield the immediate precursors to the large and small rRNAs (23S and 16S). Processes some mRNAs, and tRNAs when they are encoded in the rRNA operon. Processes pre-crRNA and tracrRNA of type II CRISPR loci if present in the organism. This Natranaerobius thermophilus (strain ATCC BAA-1301 / DSM 18059 / JW/NM-WN-LF) protein is Ribonuclease 3.